Consider the following 150-residue polypeptide: MADKFHILLLNGPNLNLLGTREPDKYGHTTLADITADLSALAGSLGAEFSHFQSNAEHALIDRIHQARGNTDFIVINPAAFTHTSVALRDALLAVNIPFIEIHLSNVHAREPFRHHSYLSDIAIGVICGLGADGYHFALQTAVKRLSTSN.

The active-site Proton acceptor is the Tyr26. Substrate is bound by residues Asn77, His83, and Asp90. The Proton donor role is filled by His103. Substrate is bound by residues 104-105 and Arg114; that span reads LS.

It belongs to the type-II 3-dehydroquinase family. In terms of assembly, homododecamer.

The enzyme catalyses 3-dehydroquinate = 3-dehydroshikimate + H2O. It functions in the pathway metabolic intermediate biosynthesis; chorismate biosynthesis; chorismate from D-erythrose 4-phosphate and phosphoenolpyruvate: step 3/7. Functionally, catalyzes a trans-dehydration via an enolate intermediate. This Sodalis glossinidius (strain morsitans) protein is 3-dehydroquinate dehydratase.